The sequence spans 140 residues: Acyl-coenzyme A thioesterase 13 (140 aa).

The residue at position 1 (M1) is an N-acetylmethionine. N6-acetyllysine is present on residues K27, K37, and K43. E46 contacts CoA. Substrate is bound by residues N50 and G81. Residues S83, 90-95 (YMSPAK), and 108-113 (KQGKTL) each bind CoA. K108 and K127 each carry N6-acetyllysine. CoA is bound at residue H137.

The protein belongs to the thioesterase PaaI family. In terms of assembly, homotetramer. Interacts with PCTP. In terms of tissue distribution, highly expressed in the kidney and moderately in the heart, liver, brain, small and large intestine. Also expressed in brown adipose tissue.

Its subcellular location is the cytoplasm. The protein resides in the cytosol. The protein localises to the mitochondrion. It is found in the nucleus. It localises to the cytoskeleton. Its subcellular location is the spindle. The enzyme catalyses a fatty acyl-CoA + H2O = a fatty acid + CoA + H(+). The catalysed reaction is decanoyl-CoA + H2O = decanoate + CoA + H(+). It catalyses the reaction octanoyl-CoA + H2O = octanoate + CoA + H(+). It carries out the reaction butanoyl-CoA + H2O = butanoate + CoA + H(+). The enzyme catalyses hexanoyl-CoA + H2O = hexanoate + CoA + H(+). The catalysed reaction is tetradecanoyl-CoA + H2O = tetradecanoate + CoA + H(+). It catalyses the reaction hexadecanoyl-CoA + H2O = hexadecanoate + CoA + H(+). It carries out the reaction dodecanoyl-CoA + H2O = dodecanoate + CoA + H(+). The enzyme catalyses (9Z)-octadecenoyl-CoA + H2O = (9Z)-octadecenoate + CoA + H(+). Catalyzes the hydrolysis of acyl-CoAs into free fatty acids and coenzyme A (CoASH), regulating their respective intracellular levels. Has acyl-CoA thioesterase activity towards medium (C12) and long-chain (C18) fatty acyl-CoA substrates. Can also hydrolyze 3-hydroxyphenylacetyl-CoA and 3,4-dihydroxyphenylacetyl-CoA (in vitro). May play a role in controlling adaptive thermogenesis. In Mus musculus (Mouse), this protein is Acyl-coenzyme A thioesterase 13.